Consider the following 712-residue polypeptide: Probable metal-nicotianamine transporter YSL11 (712 aa).

The disordered stretch occupies residues 25–48; that stretch reads RRNTTAAARGNAGEEEEEAEAVAP. A run of 14 helical transmembrane segments spans residues 70-90, 93-113, 138-158, 180-200, 242-262, 300-320, 345-365, 418-438, 446-466, 478-498, 532-552, 593-613, 631-651, and 666-686; these read AFVV…KLSL, GVIP…VRLW, CVVS…LFGM, LGWI…ALVP, LGKY…YTAG, IVNV…WPLI, VFIT…KVFG, VAIG…PLII, ILIA…GSGL, LAIF…LVGL, FVSQ…VFWL, LTLC…KDLV, FYLG…LYFW, and VASG…VLSL.

This sequence belongs to the YSL (TC 2.A.67.2) family.

The protein localises to the membrane. In terms of biological role, may be involved in the transport of nicotianamine-chelated metals. The protein is Probable metal-nicotianamine transporter YSL11 (YSL11) of Oryza sativa subsp. japonica (Rice).